Consider the following 517-residue polypeptide: 2,3-bisphosphoglycerate-independent phosphoglycerate mutase (517 aa).

The Mn(2+) site is built by D12 and S62. S62 (phosphoserine intermediate) is an active-site residue. Substrate is bound by residues H123, 153-154 (RD), R185, R191, 261-264 (RSDR), and K336. Mn(2+)-binding residues include D403, H407, D444, H445, and H463.

It belongs to the BPG-independent phosphoglycerate mutase family. In terms of assembly, monomer. The cofactor is Mn(2+).

It carries out the reaction (2R)-2-phosphoglycerate = (2R)-3-phosphoglycerate. It participates in carbohydrate degradation; glycolysis; pyruvate from D-glyceraldehyde 3-phosphate: step 3/5. In terms of biological role, catalyzes the interconversion of 2-phosphoglycerate and 3-phosphoglycerate. This Methylobacillus flagellatus (strain ATCC 51484 / DSM 6875 / VKM B-1610 / KT) protein is 2,3-bisphosphoglycerate-independent phosphoglycerate mutase.